Reading from the N-terminus, the 463-residue chain is Sialic acid-binding Ig-like lectin 9 (463 aa).

A signal peptide spans 1–17 (MLLLLLPLLWGRERAEG). Residues 18–348 (QTSKLLTMQS…SKATSGVTQG (331 aa)) lie on the Extracellular side of the membrane. One can recognise an Ig-like V-type domain in the interval 20-140 (SKLLTMQSSV…KHHRLSVNVT (121 aa)). 3 disulfides stabilise this stretch: Cys-36–Cys-170, Cys-41–Cys-102, and Cys-164–Cys-213. Asn-101 carries an N-linked (GlcNAc...) asparagine glycan. Residue Arg-120 coordinates N-acetylneuraminate. Asn-138 and Asn-161 each carry an N-linked (GlcNAc...) asparagine glycan. Residues 146 to 229 (PNILIPGTLE…ASVTTNKTVH (84 aa)) enclose the Ig-like C2-type 1 domain. N-linked (GlcNAc...) asparagine glycosylation is found at Asn-225, Asn-231, Asn-238, and Asn-256. Residues 236 to 336 (PQNLTMTVFQ…GSQQVYLNVS (101 aa)) form the Ig-like C2-type 2 domain. Cys-272 and Cys-320 form a disulfide bridge. Asn-334 carries N-linked (GlcNAc...) asparagine glycosylation. A helical transmembrane segment spans residues 349–369 (VVGGAGATALVFLSFCVIFVV). Topologically, residues 370–463 (VRSCRKKSAR…TEYSEIKIHR (94 aa)) are cytoplasmic. A disordered region spans residues 380 to 428 (PAAGVGDTGIEDANAVRGSASQGPLTEPWAEDSPPDQPPPASARSSVGE). Positions 431-436 (LQYASL) match the ITIM motif motif. Residues 444 to 463 (WDSRGQEATDTEYSEIKIHR) form a disordered region. The short motif at 454–459 (TEYSEI) is the SLAM-like motif element.

Belongs to the immunoglobulin superfamily. SIGLEC (sialic acid binding Ig-like lectin) family. Expressed by peripheral blood leukocytes (neutrophils and monocytes but not eosinophils). Found in liver, fetal liver, bone marrow, placenta, spleen and in lower levels in skeletal muscle, fetal brain, stomach, lung, thymus, prostate, brain, mammary, adrenal gland, colon, trachea, cerebellum, testis, small intestine and spinal cordon.

The protein localises to the membrane. Putative adhesion molecule that mediates sialic-acid dependent binding to cells. Preferentially binds to alpha-2,3- or alpha-2,6-linked sialic acid. The sialic acid recognition site may be masked by cis interactions with sialic acids on the same cell surface. The chain is Sialic acid-binding Ig-like lectin 9 (SIGLEC9) from Homo sapiens (Human).